A 289-amino-acid chain; its full sequence is (3R)-3-[(carboxymethyl)amino]fatty acid oxygenase/decarboxylase (289 aa).

A (3R)-3-[(carboxymethyl)amino]fatty acid-binding residues include Tyr65, Tyr70, and Gly93. Fe(2+) is bound by residues His97 and Asp99. Tyr100 and Lys158 together coordinate a (3R)-3-[(carboxymethyl)amino]fatty acid. His260 is a binding site for Fe(2+). His264 provides a ligand contact to 2-oxoglutarate. Position 275 (Arg275) interacts with a (3R)-3-[(carboxymethyl)amino]fatty acid.

Belongs to the TfdA dioxygenase family. It depends on Fe(2+) as a cofactor.

It catalyses the reaction a (3R)-3-[(carboxymethyl)amino]fatty acid + 2 2-oxoglutarate + 2 O2 = a (3R)-3-isocyanyl-fatty acid + 2 succinate + 3 CO2 + 2 H2O. The catalysed reaction is a (3R)-3-[(carboxymethyl)amino]fatty acid + 2-oxoglutarate + O2 = a (3R)-3-{[carboxy(hydroxy)methyl]amino}fatty acid + succinate + CO2. It carries out the reaction a (3R)-3-{[carboxy(hydroxy)methyl]amino}fatty acid + 2-oxoglutarate + O2 = a (3R)-3-isocyanyl-fatty acid + succinate + 2 CO2 + 2 H2O. In terms of biological role, involved in the biosynthesis of a unique class of isonitrile lipopeptides (INLPs) that seem to play a role in metal acquisition in M.marinum. Catalyzes the conversion of (3R)-3-[(carboxymethyl)amino]fatty acids to (3R)-3-isocyanyl-fatty acids through an oxidative decarboxylation mechanism, thereby generating the isonitrile group of INLPs. The polypeptide is (3R)-3-[(carboxymethyl)amino]fatty acid oxygenase/decarboxylase (Mycobacterium marinum (strain ATCC BAA-535 / M)).